A 589-amino-acid chain; its full sequence is Aspartate--tRNA ligase (589 aa).

L-aspartate is bound at residue E174. The interval 198–201 is aspartate; it reads QLFK. R220 is a binding site for L-aspartate. Residues 220–222 and Q229 each bind ATP; that span reads RDE. Residue H448 participates in L-aspartate binding. E483 serves as a coordination point for ATP. L-aspartate is bound at residue R490. 535–538 lines the ATP pocket; the sequence is GIDR.

This sequence belongs to the class-II aminoacyl-tRNA synthetase family. Type 1 subfamily. Homodimer.

It is found in the cytoplasm. The enzyme catalyses tRNA(Asp) + L-aspartate + ATP = L-aspartyl-tRNA(Asp) + AMP + diphosphate. Its function is as follows. Catalyzes the attachment of L-aspartate to tRNA(Asp) in a two-step reaction: L-aspartate is first activated by ATP to form Asp-AMP and then transferred to the acceptor end of tRNA(Asp). This chain is Aspartate--tRNA ligase, found in Xylella fastidiosa (strain M23).